The following is a 228-amino-acid chain: Phosphoribosylformylglycinamidine synthase subunit PurQ (228 aa).

In terms of domain architecture, Glutamine amidotransferase type-1 spans 2–228; sequence TVVVVQFGGS…DGKGILQAFG (227 aa). Catalysis depends on Cys88, which acts as the Nucleophile. Catalysis depends on residues His205 and Glu207.

Part of the FGAM synthase complex composed of 1 PurL, 1 PurQ and 2 PurS subunits.

It localises to the cytoplasm. It catalyses the reaction N(2)-formyl-N(1)-(5-phospho-beta-D-ribosyl)glycinamide + L-glutamine + ATP + H2O = 2-formamido-N(1)-(5-O-phospho-beta-D-ribosyl)acetamidine + L-glutamate + ADP + phosphate + H(+). The enzyme catalyses L-glutamine + H2O = L-glutamate + NH4(+). It functions in the pathway purine metabolism; IMP biosynthesis via de novo pathway; 5-amino-1-(5-phospho-D-ribosyl)imidazole from N(2)-formyl-N(1)-(5-phospho-D-ribosyl)glycinamide: step 1/2. In terms of biological role, part of the phosphoribosylformylglycinamidine synthase complex involved in the purines biosynthetic pathway. Catalyzes the ATP-dependent conversion of formylglycinamide ribonucleotide (FGAR) and glutamine to yield formylglycinamidine ribonucleotide (FGAM) and glutamate. The FGAM synthase complex is composed of three subunits. PurQ produces an ammonia molecule by converting glutamine to glutamate. PurL transfers the ammonia molecule to FGAR to form FGAM in an ATP-dependent manner. PurS interacts with PurQ and PurL and is thought to assist in the transfer of the ammonia molecule from PurQ to PurL. The sequence is that of Phosphoribosylformylglycinamidine synthase subunit PurQ from Haloquadratum walsbyi (strain DSM 16790 / HBSQ001).